The sequence spans 320 residues: Quinolinate synthase (320 aa).

2 residues coordinate iminosuccinate: His34 and Ser51. Cys96 is a [4Fe-4S] cluster binding site. Residues 122–124 and Ser139 contribute to the iminosuccinate site; that span reads YIN. Cys182 lines the [4Fe-4S] cluster pocket. Iminosuccinate-binding positions include 208 to 210 and Thr225; that span reads HPE. Cys276 provides a ligand contact to [4Fe-4S] cluster.

This sequence belongs to the quinolinate synthase family. Type 2 subfamily. The cofactor is [4Fe-4S] cluster.

The protein resides in the cytoplasm. The catalysed reaction is iminosuccinate + dihydroxyacetone phosphate = quinolinate + phosphate + 2 H2O + H(+). Its pathway is cofactor biosynthesis; NAD(+) biosynthesis; quinolinate from iminoaspartate: step 1/1. Its function is as follows. Catalyzes the condensation of iminoaspartate with dihydroxyacetone phosphate to form quinolinate. The polypeptide is Quinolinate synthase (Synechococcus sp. (strain ATCC 27144 / PCC 6301 / SAUG 1402/1) (Anacystis nidulans)).